The chain runs to 502 residues: CBL-interacting protein kinase 11 (502 aa).

The region spanning 12–267 is the Protein kinase domain; it reads YEVGKQLGQG…IPRIKRSTWY (256 aa). Residues 18–26 and lysine 41 contribute to the ATP site; that span reads LGQGTFAKV. Aspartate 135 (proton acceptor) is an active-site residue. The tract at residues 153–182 is activation loop; it reads DFGLSALAESKRQDGLLHTTCGTPAYVAPE. The region spanning 297–333 is the NAF domain; the sequence is AECSTSEENQGSLSLPNLNAFDIISLSTGFNLSGFFE. The tract at residues 339–367 is PPI; the sequence is QEERFTTRQPVTTVLGKLKELAKRLKLKV. The segment at 447–502 is disordered; that stretch reads LQGEQQQSPLPPELPQDQLQPSLPQQEKQDMPEPPLLPQVPQEEVQTSIPAEQTKN. The span at 461 to 472 shows a compositional bias: low complexity; it reads PQDQLQPSLPQQ. Residues 493-502 show a composition bias toward polar residues; the sequence is TSIPAEQTKN.

Belongs to the protein kinase superfamily. CAMK Ser/Thr protein kinase family. SNF1 subfamily. It depends on Mn(2+) as a cofactor.

The catalysed reaction is L-seryl-[protein] + ATP = O-phospho-L-seryl-[protein] + ADP + H(+). It catalyses the reaction L-threonyl-[protein] + ATP = O-phospho-L-threonyl-[protein] + ADP + H(+). Its function is as follows. CIPK serine-threonine protein kinases interact with CBL proteins. Binding of a CBL protein to the regulatory NAF domain of CIPK protein lead to the activation of the kinase in a calcium-dependent manner. This chain is CBL-interacting protein kinase 11 (CIPK11), found in Oryza sativa subsp. japonica (Rice).